Consider the following 1035-residue polypeptide: Beta-galactosidase (1035 aa).

Positions 101 and 199 each coordinate substrate. D199 contacts Na(+). Mg(2+)-binding residues include E415, H417, and E460. Substrate is bound by residues E460 and 540–543; that span reads EYAH. E460 (proton donor) is an active-site residue. E540 (nucleophile) is an active-site residue. Residue N600 participates in Mg(2+) binding. The Na(+) site is built by F604 and N607. Residues N607 and W1011 each coordinate substrate.

Belongs to the glycosyl hydrolase 2 family. In terms of assembly, homotetramer. It depends on Mg(2+) as a cofactor. Requires Na(+) as cofactor.

It catalyses the reaction Hydrolysis of terminal non-reducing beta-D-galactose residues in beta-D-galactosides.. In Psychromonas ingrahamii (strain DSM 17664 / CCUG 51855 / 37), this protein is Beta-galactosidase.